An 860-amino-acid chain; its full sequence is DNA mismatch repair protein MutS (860 aa).

618 to 625 contributes to the ATP binding site; sequence GPNMGGKS.

It belongs to the DNA mismatch repair MutS family.

Its function is as follows. This protein is involved in the repair of mismatches in DNA. It is possible that it carries out the mismatch recognition step. This protein has a weak ATPase activity. The protein is DNA mismatch repair protein MutS of Hahella chejuensis (strain KCTC 2396).